An 82-amino-acid polypeptide reads, in one-letter code: Acyl carrier protein (82 aa).

The Carrier domain maps to 3–81; the sequence is SSEQEILAGL…DAVTYIAGAQ (79 aa). At Ser-41 the chain carries O-(pantetheine 4'-phosphoryl)serine.

Belongs to the acyl carrier protein (ACP) family. 4'-phosphopantetheine is transferred from CoA to a specific serine of apo-ACP by AcpS. This modification is essential for activity because fatty acids are bound in thioester linkage to the sulfhydryl of the prosthetic group.

It is found in the cytoplasm. It participates in lipid metabolism; fatty acid biosynthesis. In terms of biological role, carrier of the growing fatty acid chain in fatty acid biosynthesis. This Beutenbergia cavernae (strain ATCC BAA-8 / DSM 12333 / CCUG 43141 / JCM 11478 / NBRC 16432 / NCIMB 13614 / HKI 0122) protein is Acyl carrier protein.